Reading from the N-terminus, the 362-residue chain is Chorismate synthase (362 aa).

Position 47 (Arg-47) interacts with NADP(+). Residues Arg-124 to Ser-126, Gly-286, Lys-301 to Thr-305, and Arg-327 contribute to the FMN site.

Belongs to the chorismate synthase family. In terms of assembly, homotetramer. It depends on FMNH2 as a cofactor.

It catalyses the reaction 5-O-(1-carboxyvinyl)-3-phosphoshikimate = chorismate + phosphate. It participates in metabolic intermediate biosynthesis; chorismate biosynthesis; chorismate from D-erythrose 4-phosphate and phosphoenolpyruvate: step 7/7. Functionally, catalyzes the anti-1,4-elimination of the C-3 phosphate and the C-6 proR hydrogen from 5-enolpyruvylshikimate-3-phosphate (EPSP) to yield chorismate, which is the branch point compound that serves as the starting substrate for the three terminal pathways of aromatic amino acid biosynthesis. This reaction introduces a second double bond into the aromatic ring system. This Prochlorococcus marinus (strain SARG / CCMP1375 / SS120) protein is Chorismate synthase.